A 917-amino-acid polypeptide reads, in one-letter code: MENILCFLNSYTETGLSPDSHCLDIDLNFICLSGLGLFILYLFYMVLTLYSSPTEKNNDTQKHQGRARRKRKSVTFKDRKSLQKEAEEERKLHSFLKSFGPPVSCSPLGQHHDTTLFRRLLCPDPVCRVCNRATADIQRLLSWESLKDAAPSVSPLASSASGAESSFTLASTPSATTPEDLILSSRPKPSPPPPLILSPDLITTLADLFSPSPLRDPLPPQPVSPLDSKFPIDHSPPQQLPFPLLPPHHIERVEPSLQPEASLSLNTIFSFGSTLCQDISQAVNRTDSCARHHGPPTPSALPPEDCTVTQSKSNLTVLKTFPEMLSLGGSGGSSTSAPTTKGIDHSCPASSEFSWWQPHAKDSFSSNFVPSDFMEELLTLHSSEASLGGHSVANIIQPVNISFLSHDIPALLERQVKRRGDFLMWKENGKKPGSFPTQLRPNYQLNSSRNMLTSTAVKHDLAESFPFWASKGKLEWQHIHQQPPYSKCFEDHLEQKYVQLFWGLPSLHSESLHPTVFVQHGRSSMFVFFNGITNTSMSHESPVLPPPQPLFLPSTQPLPLPQTLPRGQSLHLTQVKSLAQPQSPFPALPPSPLFLIRVCGVCFHRPQNEARSLMPSEINHLEWNVLQKVQESVWGLPSVVQKSQEDFCPPAPNPVLVRKSFKVHVPISIIPGDFPLSSEVRKKLEQHIRKRLIQRRWGLPRRIHESLSLLRPQNKISELSVSESIHGPLNISLVEGQRCNVLKKSASSFPRSFHERSSNMLSMENVGNYQGCSQETAPKNHLLHDPETSSDEDLRSNSERDLGTHMMHLSGNDSGVRLGQKQLENALTVHLSKKFEEINEGRMPGTVHSSWHSVKQTICLPEKSHSQIKHRNLAALVSEDHGVDTSQEMSFLSSNKQKMLEAHIKSFHMKPILNLSI.

A helical membrane pass occupies residues 29–49 (FICLSGLGLFILYLFYMVLTL). Disordered stretches follow at residues 55-80 (EKNN…KDRK), 152-195 (SVSP…PPPL), and 773-798 (SQET…RSNS). Over residues 63–74 (HQGRARRKRKSV) the composition is skewed to basic residues. Over residues 152-163 (SVSPLASSASGA) the composition is skewed to low complexity. The span at 164 to 177 (ESSFTLASTPSATT) shows a compositional bias: polar residues. A compositionally biased stretch (basic and acidic residues) spans 782-798 (LLHDPETSSDEDLRSNS).

This sequence belongs to the SPATA31 family.

It is found in the membrane. May play a role in spermatogenesis. This chain is Spermatogenesis-associated protein 31D4 (SPATA31D4), found in Homo sapiens (Human).